Here is a 78-residue protein sequence, read N- to C-terminus: Putative membrane protein insertion efficiency factor (78 aa).

It belongs to the UPF0161 family.

It localises to the cell membrane. Functionally, could be involved in insertion of integral membrane proteins into the membrane. The chain is Putative membrane protein insertion efficiency factor from Bacillus thuringiensis subsp. konkukian (strain 97-27).